The primary structure comprises 168 residues: Bifunctional protein PyrR (168 aa).

The PRPP-binding motif lies at L90–T102.

The protein belongs to the purine/pyrimidine phosphoribosyltransferase family. PyrR subfamily.

The enzyme catalyses UMP + diphosphate = 5-phospho-alpha-D-ribose 1-diphosphate + uracil. Regulates the transcription of the pyrimidine nucleotide (pyr) operon in response to exogenous pyrimidines. Functionally, also displays a weak uracil phosphoribosyltransferase activity which is not physiologically significant. The sequence is that of Bifunctional protein PyrR from Pseudomonas fluorescens (strain ATCC BAA-477 / NRRL B-23932 / Pf-5).